The sequence spans 397 residues: Acetate kinase (397 aa).

Asn7 provides a ligand contact to Mg(2+). An ATP-binding site is contributed by Lys14. Substrate is bound at residue Arg90. The Proton donor/acceptor role is filled by Asp147. Residues 207–211, 282–284, and 330–334 each bind ATP; these read HLGNG, DFR, and GLGEN. Residue Glu383 coordinates Mg(2+).

Belongs to the acetokinase family. In terms of assembly, homodimer. Mg(2+) is required as a cofactor. Mn(2+) serves as cofactor.

The protein resides in the cytoplasm. The enzyme catalyses acetate + ATP = acetyl phosphate + ADP. Its pathway is metabolic intermediate biosynthesis; acetyl-CoA biosynthesis; acetyl-CoA from acetate: step 1/2. Functionally, catalyzes the formation of acetyl phosphate from acetate and ATP. Can also catalyze the reverse reaction. This chain is Acetate kinase, found in Clostridium botulinum (strain Loch Maree / Type A3).